The primary structure comprises 327 residues: Aspartate--ammonia ligase (327 aa).

The protein belongs to the class-II aminoacyl-tRNA synthetase family. AsnA subfamily.

Its subcellular location is the cytoplasm. The enzyme catalyses L-aspartate + NH4(+) + ATP = L-asparagine + AMP + diphosphate + H(+). Its pathway is amino-acid biosynthesis; L-asparagine biosynthesis; L-asparagine from L-aspartate (ammonia route): step 1/1. The sequence is that of Aspartate--ammonia ligase from Bacillus mycoides (strain KBAB4) (Bacillus weihenstephanensis).